The sequence spans 367 residues: tRNA pseudouridine synthase D (367 aa).

Catalysis depends on D80, which acts as the Nucleophile. One can recognise a TRUD domain in the interval 156-316 (GIPNWFGEQR…LKQERRALRL (161 aa)).

The protein belongs to the pseudouridine synthase TruD family.

The enzyme catalyses uridine(13) in tRNA = pseudouridine(13) in tRNA. Its function is as follows. Responsible for synthesis of pseudouridine from uracil-13 in transfer RNAs. This chain is tRNA pseudouridine synthase D, found in Xanthomonas campestris pv. campestris (strain B100).